The chain runs to 1074 residues: DNA-directed RNA polymerase subunit beta (1074 aa).

It belongs to the RNA polymerase beta chain family. In terms of assembly, in plastids the minimal PEP RNA polymerase catalytic core is composed of four subunits: alpha, beta, beta', and beta''. When a (nuclear-encoded) sigma factor is associated with the core the holoenzyme is formed, which can initiate transcription.

The protein resides in the plastid. Its subcellular location is the chloroplast. The enzyme catalyses RNA(n) + a ribonucleoside 5'-triphosphate = RNA(n+1) + diphosphate. Functionally, DNA-dependent RNA polymerase catalyzes the transcription of DNA into RNA using the four ribonucleoside triphosphates as substrates. This Chara vulgaris (Common stonewort) protein is DNA-directed RNA polymerase subunit beta.